We begin with the raw amino-acid sequence, 340 residues long: Glycerol-3-phosphate dehydrogenase [NAD(P)+] (340 aa).

NADPH-binding residues include Ser-15, Tyr-16, His-36, and Lys-110. Sn-glycerol 3-phosphate-binding residues include Lys-110, Gly-139, and Thr-141. Ala-143 provides a ligand contact to NADPH. 5 residues coordinate sn-glycerol 3-phosphate: Lys-196, Asp-249, Ser-259, Arg-260, and Asn-261. The active-site Proton acceptor is Lys-196. Arg-260 lines the NADPH pocket. NADPH is bound by residues Val-284 and Glu-286.

Belongs to the NAD-dependent glycerol-3-phosphate dehydrogenase family.

The protein localises to the cytoplasm. It catalyses the reaction sn-glycerol 3-phosphate + NAD(+) = dihydroxyacetone phosphate + NADH + H(+). The enzyme catalyses sn-glycerol 3-phosphate + NADP(+) = dihydroxyacetone phosphate + NADPH + H(+). Its pathway is membrane lipid metabolism; glycerophospholipid metabolism. Functionally, catalyzes the reduction of the glycolytic intermediate dihydroxyacetone phosphate (DHAP) to sn-glycerol 3-phosphate (G3P), the key precursor for phospholipid synthesis. The polypeptide is Glycerol-3-phosphate dehydrogenase [NAD(P)+] (Serratia marcescens).